The primary structure comprises 457 residues: Senescence-associated protein OSA15, chloroplastic (457 aa).

A chloroplast-targeting transit peptide spans 1–57 (MATRIPGTVAASGVYYNDQYRMPCKLKGIHCMALNCIPQKAKVRKCMNGYQSTFRFC).

It belongs to the ATA15/OSA15 family. Expressed in leaves (at protein level).

It is found in the plastid. The protein resides in the chloroplast. Its function is as follows. May be involved in the regulation of leaf senescence. The sequence is that of Senescence-associated protein OSA15, chloroplastic from Oryza sativa subsp. japonica (Rice).